The following is a 215-amino-acid chain: Short neuropeptide F (215 aa).

The N-terminal stretch at 1 to 22 (MCRINFTTLSLILVLWSGSLMS) is a signal peptide. A propeptide spanning residues 23–56 (EPSQNADGSIKGLYEYLLQREYAAPVSYADHQIK) is cleaved from the precursor. Phenylalanine amide is present on residues Phe69 and Phe101. At Trp129 the chain carries Tryptophan amide. Phe157 bears the Phenylalanine amide mark. Residues 160–215 (SDPSWAMFNEHQLDEQQFADATRQPSKTLRGDEPTSIESTEQVESEENSPSNMDEK) constitute a propeptide that is removed on maturation. A disordered region spans residues 173-215 (DEQQFADATRQPSKTLRGDEPTSIESTEQVESEENSPSNMDEK).

This sequence belongs to the NPY family.

The protein localises to the secreted. In terms of biological role, plays a role in controlling food intake and regulating body size. The polypeptide is Short neuropeptide F (Aedes aegypti (Yellowfever mosquito)).